We begin with the raw amino-acid sequence, 204 residues long: Proteasome subunit beta type-3 (204 aa).

The protein belongs to the peptidase T1B family. In terms of assembly, the 26S proteasome consists of a 20S proteasome core and two 19S regulatory subunits. The 20S proteasome core is composed of 28 subunits that are arranged in four stacked rings, resulting in a barrel-shaped structure. The two end rings are each formed by seven alpha subunits, and the two central rings are each formed by seven beta subunits. The catalytic chamber with the active sites is on the inside of the barrel.

It localises to the cytoplasm. The protein resides in the nucleus. Functionally, non-catalytic component of the proteasome, a multicatalytic proteinase complex which is characterized by its ability to cleave peptides with Arg, Phe, Tyr, Leu, and Glu adjacent to the leaving group at neutral or slightly basic pH. The proteasome has an ATP-dependent proteolytic activity. The chain is Proteasome subunit beta type-3 (PBC1) from Oryza sativa subsp. japonica (Rice).